The sequence spans 292 residues: Ribosomal protein L11 methyltransferase (292 aa).

S-adenosyl-L-methionine-binding residues include Thr136, Gly159, Asp181, and Asn228.

It belongs to the methyltransferase superfamily. PrmA family.

The protein resides in the cytoplasm. It carries out the reaction L-lysyl-[protein] + 3 S-adenosyl-L-methionine = N(6),N(6),N(6)-trimethyl-L-lysyl-[protein] + 3 S-adenosyl-L-homocysteine + 3 H(+). Its function is as follows. Methylates ribosomal protein L11. The chain is Ribosomal protein L11 methyltransferase from Rhizobium etli (strain CIAT 652).